Reading from the N-terminus, the 766-residue chain is Exocyst complex component 6 (766 aa).

Residues 28 to 90 (NTKQIGDQLE…SLDTSLRQIS (63 aa)) adopt a coiled-coil conformation.

This sequence belongs to the SEC15 family. In terms of assembly, the exocyst complex is composed of Sec3/Exoc1, Sec5/Exoc2, Sec6/Exoc3, Sec8/Exoc4, Sec10/Exoc5, Sec15/Exoc6, Exo70/Exoc7 and Exo84/Exoc8. Interacts with RAB3, RAB8, RAB11 and RAB27. In terms of tissue distribution, detected in developing rhabdomeres in photoreceptor cells.

It localises to the cell projection. Its subcellular location is the rhabdomere. Functionally, component of the exocyst complex involved in the docking of exocytic vesicles with fusion sites on the plasma membrane. This is Exocyst complex component 6 from Drosophila melanogaster (Fruit fly).